Here is a 93-residue protein sequence, read N- to C-terminus: Small ribosomal subunit protein uS19 (93 aa).

It belongs to the universal ribosomal protein uS19 family.

In terms of biological role, protein S19 forms a complex with S13 that binds strongly to the 16S ribosomal RNA. This chain is Small ribosomal subunit protein uS19, found in Ehrlichia chaffeensis (strain ATCC CRL-10679 / Arkansas).